The chain runs to 132 residues: Fatty acid-binding protein (132 aa).

Residues arginine 107 and 127–129 (RNY) contribute to the (5Z,8Z,11Z,14Z)-eicosatetraenoate site. (9Z)-octadecenoate contacts are provided by residues arginine 107 and 127–129 (RNY).

This sequence belongs to the calycin superfamily. Fatty-acid binding protein (FABP) family.

The protein resides in the cytoplasm. Its function is as follows. May play a role in the transport of fatty acids. Binds to various fatty acids but not retinoids. This is Fatty acid-binding protein from Schistosoma japonicum (Blood fluke).